The sequence spans 514 residues: Probable E3 ubiquitin-protein ligase ARI10 (514 aa).

Residues 1–18 are compositionally biased toward acidic residues; the sequence is MDYSDDDMIDNESGEENN. The segment at 1–26 is disordered; that stretch reads MDYSDDDMIDNESGEENNSDGGGNES. Positions 117 to 322 are TRIAD supradomain; it reads VDIQCGICFE…SDHYACNNYV (206 aa). Zn(2+) contacts are provided by C121, C124, C138, H140, C143, C146, C166, C171, C210, C215, C231, C233, C238, C241, H246, C251, C278, and C281. Residues 121-171 form an RING-type 1 zinc finger; sequence CGICFESYTRKEIASVSCGHPYCKTCWTGYITTKIEDGPGCLRVKCPEPSC. Residues 190 to 251 form an IBR-type zinc finger; the sequence is DKYYRYFLRS…SEDAHSPVDC (62 aa). The RING-type 2; atypical zinc-finger motif lies at 278-308; sequence CPKCKRPIEKSHGCNHMTCSASCGHRFCWIC. The active site involves C291. Zn(2+)-binding residues include C296, C300, C305, C308, H315, and C318.

It belongs to the RBR family. Ariadne subfamily. The cofactor is Zn(2+).

It carries out the reaction [E2 ubiquitin-conjugating enzyme]-S-ubiquitinyl-L-cysteine + [acceptor protein]-L-lysine = [E2 ubiquitin-conjugating enzyme]-L-cysteine + [acceptor protein]-N(6)-ubiquitinyl-L-lysine.. It participates in protein modification; protein ubiquitination. Functionally, might act as an E3 ubiquitin-protein ligase, or as part of E3 complex, which accepts ubiquitin from specific E2 ubiquitin-conjugating enzymes and then transfers it to substrates. This is Probable E3 ubiquitin-protein ligase ARI10 (ARI10) from Arabidopsis thaliana (Mouse-ear cress).